The following is a 431-amino-acid chain: Protein translocase subunit SecY 1 (431 aa).

The next 10 helical transmembrane spans lie at 18–38, 67–87, 115–135, 150–170, 178–198, 215–235, 268–288, 312–332, 365–385, and 392–412; these read IYFT…TVPG, YSIF…IQLL, YLTL…FNAL, VEIA…GDEI, GVSV…LYQI, ILFF…VTWV, VIPV…LMAF, GVII…FVQV, LIKL…LPQL, and LPSS…VVLE.

This sequence belongs to the SecY/SEC61-alpha family. As to quaternary structure, component of the Sec protein translocase complex. Heterotrimer consisting of SecY, SecE and SecG subunits. The heterotrimers can form oligomers, although 1 heterotrimer is thought to be able to translocate proteins. Interacts with the ribosome. Interacts with SecDF, and other proteins may be involved. Interacts with SecA.

The protein resides in the cell membrane. In terms of biological role, the central subunit of the protein translocation channel SecYEG. Consists of two halves formed by TMs 1-5 and 6-10. These two domains form a lateral gate at the front which open onto the bilayer between TMs 2 and 7, and are clamped together by SecE at the back. The channel is closed by both a pore ring composed of hydrophobic SecY resides and a short helix (helix 2A) on the extracellular side of the membrane which forms a plug. The plug probably moves laterally to allow the channel to open. The ring and the pore may move independently. The protein is Protein translocase subunit SecY 1 of Lactobacillus kefiranofaciens subsp. kefiranofaciens.